We begin with the raw amino-acid sequence, 440 residues long: Ribosomal protein uS12 methylthiotransferase RimO (440 aa).

The MTTase N-terminal domain maps to 5–116 (PTIAISHLGC…IVSVIERAEQ (112 aa)). Residues C14, C50, C79, C154, C158, and C161 each coordinate [4Fe-4S] cluster. One can recognise a Radical SAM core domain in the interval 140 to 370 (TTTEGVAYLR…ALQQPISWRK (231 aa)). Positions 372-438 (QQEVGKTVEV…EYDLFGQVVS (67 aa)) constitute a TRAM domain.

It belongs to the methylthiotransferase family. RimO subfamily. [4Fe-4S] cluster is required as a cofactor.

Its subcellular location is the cytoplasm. It catalyses the reaction L-aspartate(89)-[ribosomal protein uS12]-hydrogen + (sulfur carrier)-SH + AH2 + 2 S-adenosyl-L-methionine = 3-methylsulfanyl-L-aspartate(89)-[ribosomal protein uS12]-hydrogen + (sulfur carrier)-H + 5'-deoxyadenosine + L-methionine + A + S-adenosyl-L-homocysteine + 2 H(+). In terms of biological role, catalyzes the methylthiolation of an aspartic acid residue of ribosomal protein uS12. This chain is Ribosomal protein uS12 methylthiotransferase RimO, found in Nostoc sp. (strain PCC 7120 / SAG 25.82 / UTEX 2576).